The chain runs to 514 residues: Glucose-1-phosphate adenylyltransferase small subunit 2, chloroplastic/amyloplastic/cytosolic (514 aa).

Residues 1–64 (MAMAAAMGVA…RRRPLVFSPR (64 aa)) constitute a chloroplast transit peptide. The disordered stretch occupies residues 35–74 (RPRRPRGVASSSSSSSSAGRRRRPLVFSPRAVSDSKSSQT). A compositionally biased stretch (low complexity) spans 41-52 (GVASSSSSSSSA).

Belongs to the bacterial/plant glucose-1-phosphate adenylyltransferase family. As to quaternary structure, heterotetramer composed of two small and two large subunits. Expressed in leaves.

Its subcellular location is the plastid. It is found in the chloroplast. The protein resides in the amyloplast. It localises to the cytoplasm. The protein localises to the cytosol. The catalysed reaction is alpha-D-glucose 1-phosphate + ATP + H(+) = ADP-alpha-D-glucose + diphosphate. The protein operates within glycan biosynthesis; starch biosynthesis. With respect to regulation, activated by 3'phosphoglycerate, inhibited by orthophosphate. Allosteric regulation. Inhibited by inorganic phosphate (Pi). In terms of biological role, involved in synthesis of starch. Catalyzes the synthesis of ADP-glucose, a molecule that serves as an activated glycosyl donor for alpha-1,4-glucan synthesis. The chloroplastic isoform 1 is essential for starch synthesis in leaf chloroplasts and the cytosolic isoform 2 for synthesis in seed endosperm. The sequence is that of Glucose-1-phosphate adenylyltransferase small subunit 2, chloroplastic/amyloplastic/cytosolic from Oryza sativa subsp. japonica (Rice).